A 413-amino-acid chain; its full sequence is Histidinol-phosphate aminotransferase, chloroplastic (413 aa).

Residues 1–35 (MGVIELCNTSSICIGRAKPSCCSIERNQRRRIICM) constitute a chloroplast transit peptide. N6-(pyridoxal phosphate)lysine is present on Lys273.

Belongs to the class-II pyridoxal-phosphate-dependent aminotransferase family. Histidinol-phosphate aminotransferase subfamily. Homodimer. Requires pyridoxal 5'-phosphate as cofactor. As to expression, mainly expressed in green tissues.

It localises to the plastid. Its subcellular location is the chloroplast. The catalysed reaction is L-histidinol phosphate + 2-oxoglutarate = 3-(imidazol-4-yl)-2-oxopropyl phosphate + L-glutamate. It functions in the pathway amino-acid biosynthesis; L-histidine biosynthesis; L-histidine from 5-phospho-alpha-D-ribose 1-diphosphate: step 7/9. The chain is Histidinol-phosphate aminotransferase, chloroplastic (HPA) from Nicotiana tabacum (Common tobacco).